A 680-amino-acid polypeptide reads, in one-letter code: Tumor protein 63 (680 aa).

The segment at M1–M107 is transcription activation. Residues Q123–D157 show a composition bias toward polar residues. A disordered region spans residues Q123 to Y171. Residues D170–Q362 mediate DNA binding. Zn(2+)-binding residues include C244, H247, C308, and C312. The segment covering D351–R360 has biased composition (basic and acidic residues). 2 disordered regions span residues D351–R393 and Y435–M472. The tract at residues R352–T388 is interaction with HIPK2. 2 stretches are compositionally biased toward polar residues: residues K361–G371 and R379–S389. The interval R394–H443 is oligomerization. Over residues Q437–Q450 the composition is skewed to low complexity. Positions T451 to M472 are enriched in polar residues. An SAM domain is found at P541–L607. A transactivation inhibition region spans residues F610–E680. K676 participates in a covalent cross-link: Glycyl lysine isopeptide (Lys-Gly) (interchain with G-Cter in SUMO).

It belongs to the p53 family. In terms of assembly, binds DNA as a homotetramer. Isoform composition of the tetramer may determine transactivation activity. Isoforms Alpha and Gamma interact with HIPK2. Interacts with SSRP1, leading to stimulate coactivator activity. Isoform 1 and isoform 2 interact with WWP1. Interacts with PDS5A. Isoform 5 (via activation domain) interacts with NOC2L. Requires Zn(2+) as cofactor. In terms of processing, may be sumoylated. Ubiquitinated. Polyubiquitination involves WWP1 and leads to proteasomal degradation of this protein. In terms of tissue distribution, widely expressed, notably in heart, kidney, placenta, prostate, skeletal muscle, testis and thymus, although the precise isoform varies according to tissue type. Progenitor cell layers of skin, breast, eye and prostate express high levels of DeltaN-type isoforms. Isoform 10 is predominantly expressed in skin squamous cell carcinomas, but not in normal skin tissues.

The protein resides in the nucleus. Its function is as follows. Acts as a sequence specific DNA binding transcriptional activator or repressor. The isoforms contain a varying set of transactivation and auto-regulating transactivation inhibiting domains thus showing an isoform specific activity. Isoform 2 activates RIPK4 transcription. May be required in conjunction with TP73/p73 for initiation of p53/TP53 dependent apoptosis in response to genotoxic insults and the presence of activated oncogenes. Involved in Notch signaling by probably inducing JAG1 and JAG2. Plays a role in the regulation of epithelial morphogenesis. The ratio of DeltaN-type and TA*-type isoforms may govern the maintenance of epithelial stem cell compartments and regulate the initiation of epithelial stratification from the undifferentiated embryonal ectoderm. Required for limb formation from the apical ectodermal ridge. Activates transcription of the p21 promoter. The protein is Tumor protein 63 (TP63) of Homo sapiens (Human).